We begin with the raw amino-acid sequence, 372 residues long: Molybdopterin synthase catalytic subunit (372 aa).

Residues 101-102 (HR), lysine 117, and 124-126 (KKE) each bind substrate.

The protein belongs to the MoaE family. MOCS2B subfamily. Heterotetramer; composed of 2 small (Mocs2A) and 2 large (Mocs2B) subunits.

It localises to the cytoplasm. The catalysed reaction is 2 [molybdopterin-synthase sulfur-carrier protein]-C-terminal-Gly-aminoethanethioate + cyclic pyranopterin phosphate + H2O = molybdopterin + 2 [molybdopterin-synthase sulfur-carrier protein]-C-terminal Gly-Gly + 2 H(+). It functions in the pathway cofactor biosynthesis; molybdopterin biosynthesis. Catalytic subunit of the molybdopterin synthase complex, a complex that catalyzes the conversion of precursor Z into molybdopterin. Acts by mediating the incorporation of 2 sulfur atoms from thiocarboxylated Mocs2A into precursor Z to generate a dithiolene group. In Drosophila willistoni (Fruit fly), this protein is Molybdopterin synthase catalytic subunit.